Here is a 61-residue protein sequence, read N- to C-terminus: Large ribosomal subunit protein uL30 (61 aa).

Belongs to the universal ribosomal protein uL30 family. As to quaternary structure, part of the 50S ribosomal subunit.

The polypeptide is Large ribosomal subunit protein uL30 (Neisseria meningitidis serogroup C (strain 053442)).